Consider the following 240-residue polypeptide: MVSPDLIRNVVGIVGNVISFGLFLSPVPIFWWIIKNKNVQNFKADPILVVTINGISLVIEAVYLTIFFLFSDKKNKKKMGVVLATEALFMAAVAVGVLLGAHTHQRRSLIVGILCVIFGTIMYSSPLTIMVVKTKSVEYMPLLLSVVSFLNGLCWTLYALIRFDIFITIPNGLGVLFAIMQLILYAIYYRTTPKKQDKNLELPTVAPIAKDTSIVAPVGNDDDVNGSTASHATINITIEP.

Residues 1–12 (MVSPDLIRNVVG) lie on the Extracellular side of the membrane. One can recognise a MtN3/slv 1 domain in the interval 10 to 48 (VVGIVGNVISFGLFLSPVPIFWWIIKNKNVQNFKADPIL). Residues 13-33 (IVGNVISFGLFLSPVPIFWWI) traverse the membrane as a helical segment. Residues 34–46 (IKNKNVQNFKADP) are Cytoplasmic-facing. Residues 47 to 67 (ILVVTINGISLVIEAVYLTIF) form a helical membrane-spanning segment. Residues 68–78 (FLFSDKKNKKK) lie on the Extracellular side of the membrane. The helical transmembrane segment at 79–99 (MGVVLATEALFMAAVAVGVLL) threads the bilayer. The Cytoplasmic segment spans residues 100-108 (GAHTHQRRS). A helical transmembrane segment spans residues 109-129 (LIVGILCVIFGTIMYSSPLTI). One can recognise a MtN3/slv 2 domain in the interval 110-191 (IVGILCVIFG…LILYAIYYRT (82 aa)). Topologically, residues 130 to 140 (MVVKTKSVEYM) are extracellular. The helical transmembrane segment at 141–161 (PLLLSVVSFLNGLCWTLYALI) threads the bilayer. The Cytoplasmic segment spans residues 162–164 (RFD). The helical transmembrane segment at 165 to 185 (IFITIPNGLGVLFAIMQLILY) threads the bilayer. The Extracellular segment spans residues 186-240 (AIYYRTTPKKQDKNLELPTVAPIAKDTSIVAPVGNDDDVNGSTASHATINITIEP). N-linked (GlcNAc...) asparagine glycans are attached at residues Asn225 and Asn235.

It belongs to the SWEET sugar transporter family. Forms homooligomers and/or heterooligomers.

Its subcellular location is the cell membrane. In terms of biological role, mediates both low-affinity uptake and efflux of sugar across the plasma membrane. This chain is Bidirectional sugar transporter SWEET7c (SWEET7C), found in Oryza sativa subsp. indica (Rice).